Here is a 222-residue protein sequence, read N- to C-terminus: uncharacterized protein (222 aa).

Belongs to the PhoU family.

The protein localises to the cytoplasm. Its function is as follows. Not known; probably involved in phosphate transport and/or metabolism. This is an uncharacterized protein from Deinococcus radiodurans (strain ATCC 13939 / DSM 20539 / JCM 16871 / CCUG 27074 / LMG 4051 / NBRC 15346 / NCIMB 9279 / VKM B-1422 / R1).